The sequence spans 120 residues: uncharacterized protein (120 aa).

An N-terminal signal peptide occupies residues Met-1–Ala-22. The Extracellular segment spans residues Phe-23–Ser-59. Residues Leu-60–Leu-80 form a helical membrane-spanning segment. Over Ser-81 to Asn-120 the chain is Cytoplasmic.

Its subcellular location is the membrane. This is an uncharacterized protein from Schizosaccharomyces pombe (strain 972 / ATCC 24843) (Fission yeast).